A 429-amino-acid chain; its full sequence is Serine--tRNA ligase (429 aa).

235-237 serves as a coordination point for L-serine; the sequence is TAE. ATP is bound at residue 266–268; sequence RSE. E289 is a binding site for L-serine. 353–356 is an ATP binding site; that stretch reads EISS. S389 lines the L-serine pocket.

It belongs to the class-II aminoacyl-tRNA synthetase family. Type-1 seryl-tRNA synthetase subfamily. Homodimer. The tRNA molecule binds across the dimer.

It localises to the cytoplasm. It catalyses the reaction tRNA(Ser) + L-serine + ATP = L-seryl-tRNA(Ser) + AMP + diphosphate + H(+). The enzyme catalyses tRNA(Sec) + L-serine + ATP = L-seryl-tRNA(Sec) + AMP + diphosphate + H(+). The protein operates within aminoacyl-tRNA biosynthesis; selenocysteinyl-tRNA(Sec) biosynthesis; L-seryl-tRNA(Sec) from L-serine and tRNA(Sec): step 1/1. Functionally, catalyzes the attachment of serine to tRNA(Ser). Is also able to aminoacylate tRNA(Sec) with serine, to form the misacylated tRNA L-seryl-tRNA(Sec), which will be further converted into selenocysteinyl-tRNA(Sec). In Haemophilus influenzae (strain PittGG), this protein is Serine--tRNA ligase.